Here is a 150-residue protein sequence, read N- to C-terminus: D-aminoacyl-tRNA deacylase (150 aa).

Residues 138 to 139 (GP) carry the Gly-cisPro motif, important for rejection of L-amino acids motif.

The protein belongs to the DTD family. As to quaternary structure, homodimer.

The protein resides in the cytoplasm. It catalyses the reaction glycyl-tRNA(Ala) + H2O = tRNA(Ala) + glycine + H(+). The enzyme catalyses a D-aminoacyl-tRNA + H2O = a tRNA + a D-alpha-amino acid + H(+). Its function is as follows. An aminoacyl-tRNA editing enzyme that deacylates mischarged D-aminoacyl-tRNAs. Also deacylates mischarged glycyl-tRNA(Ala), protecting cells against glycine mischarging by AlaRS. Acts via tRNA-based rather than protein-based catalysis; rejects L-amino acids rather than detecting D-amino acids in the active site. By recycling D-aminoacyl-tRNA to D-amino acids and free tRNA molecules, this enzyme counteracts the toxicity associated with the formation of D-aminoacyl-tRNA entities in vivo and helps enforce protein L-homochirality. The sequence is that of D-aminoacyl-tRNA deacylase from Bacteroides fragilis (strain ATCC 25285 / DSM 2151 / CCUG 4856 / JCM 11019 / LMG 10263 / NCTC 9343 / Onslow / VPI 2553 / EN-2).